The primary structure comprises 362 residues: Peptide chain release factor 1 (362 aa).

At Q237 the chain carries N5-methylglutamine. Residues 282 to 296 (QQEEDKRRAEADSTR) show a composition bias toward basic and acidic residues. Residues 282-304 (QQEEDKRRAEADSTRRSILSTGD) are disordered.

The protein belongs to the prokaryotic/mitochondrial release factor family. In terms of processing, methylated by PrmC. Methylation increases the termination efficiency of RF1.

The protein localises to the cytoplasm. Peptide chain release factor 1 directs the termination of translation in response to the peptide chain termination codons UAG and UAA. The chain is Peptide chain release factor 1 from Tolumonas auensis (strain DSM 9187 / NBRC 110442 / TA 4).